Consider the following 520-residue polypeptide: Hydroxymethylglutaryl-CoA synthase, cytoplasmic (520 aa).

Ser4 carries the post-translational modification Phosphoserine. Residues Asp43 and Ala44 each contribute to the (3S)-3-hydroxy-3-methylglutaryl-CoA site. 44 to 46 (AGK) lines the CoA pocket. Lys46 bears the N6-acetyllysine mark. Glu95 functions as the Proton donor/acceptor in the catalytic mechanism. Cys129, Asn167, Thr171, Ser221, and His264 together coordinate (3S)-3-hydroxy-3-methylglutaryl-CoA. Catalysis depends on Cys129, which acts as the Acyl-thioester intermediate. Asn167 is a CoA binding site. Ser221 contacts CoA. Residue His264 is the Proton donor/acceptor of the active site. Residues Lys269 and Lys273 each coordinate CoA. Residues Lys273, Asn343, and Ser377 each coordinate (3S)-3-hydroxy-3-methylglutaryl-CoA. Lys273 is modified (N6-acetyllysine). The disordered stretch occupies residues 488–520 (TATEHIPSPAKKVPRLPATSAESESAVISNGEH). Residues Ser495 and Ser516 each carry the phosphoserine modification. Polar residues predominate over residues 507 to 520 (SAESESAVISNGEH).

This sequence belongs to the thiolase-like superfamily. HMG-CoA synthase family. As to quaternary structure, homodimer.

It is found in the cytoplasm. It carries out the reaction acetoacetyl-CoA + acetyl-CoA + H2O = (3S)-3-hydroxy-3-methylglutaryl-CoA + CoA + H(+). Its pathway is metabolic intermediate biosynthesis; (R)-mevalonate biosynthesis; (R)-mevalonate from acetyl-CoA: step 2/3. Its function is as follows. Catalyzes the condensation of acetyl-CoA with acetoacetyl-CoA to form HMG-CoA, which is converted by HMG-CoA reductase (HMGCR) into mevalonate, a precursor for cholesterol synthesis. The sequence is that of Hydroxymethylglutaryl-CoA synthase, cytoplasmic from Mus musculus (Mouse).